A 361-amino-acid polypeptide reads, in one-letter code: Phospho-N-acetylmuramoyl-pentapeptide-transferase (361 aa).

A run of 10 helical transmembrane segments spans residues 25–45 (RGILAALTALFLSLWMGPAVI), 73–93 (TMGGSLILLTVTLSVLLWGDL), 98–118 (VWLVLAVMICFGAIGWYDDWI), 139–159 (IFGLAAGLFLYYTADVPAAIT), 168–188 (IALPLAGVSFVVIAYFWIVGF), 200–220 (GLAIMPTVLVACALGVFAYAS), 237–257 (AGELIIICSAIAGAGLGFLWF), 264–284 (VFMGDIGALSLGAVLGTIAVI), 290–310 (VLVIMGGVFVIETLSVMIQVV), and 339–359 (VIVRFWIISVVLVLIGLATLK).

Belongs to the glycosyltransferase 4 family. MraY subfamily. The cofactor is Mg(2+).

The protein resides in the cell inner membrane. The enzyme catalyses UDP-N-acetyl-alpha-D-muramoyl-L-alanyl-gamma-D-glutamyl-meso-2,6-diaminopimeloyl-D-alanyl-D-alanine + di-trans,octa-cis-undecaprenyl phosphate = di-trans,octa-cis-undecaprenyl diphospho-N-acetyl-alpha-D-muramoyl-L-alanyl-D-glutamyl-meso-2,6-diaminopimeloyl-D-alanyl-D-alanine + UMP. The protein operates within cell wall biogenesis; peptidoglycan biosynthesis. Functionally, catalyzes the initial step of the lipid cycle reactions in the biosynthesis of the cell wall peptidoglycan: transfers peptidoglycan precursor phospho-MurNAc-pentapeptide from UDP-MurNAc-pentapeptide onto the lipid carrier undecaprenyl phosphate, yielding undecaprenyl-pyrophosphoryl-MurNAc-pentapeptide, known as lipid I. This is Phospho-N-acetylmuramoyl-pentapeptide-transferase from Xanthomonas euvesicatoria pv. vesicatoria (strain 85-10) (Xanthomonas campestris pv. vesicatoria).